Consider the following 715-residue polypeptide: Fatty acid oxidation complex subunit alpha (715 aa).

Positions 1–190 are enoyl-CoA hydratase/isomerase; it reads MIYEGKAITV…KVGAVDAVVA (190 aa). Residue D297 coordinates substrate. The 3-hydroxyacyl-CoA dehydrogenase stretch occupies residues 312–715; that stretch reads HDVKQAAVLG…MAKNGQRFFN (404 aa). Residues M325, D344, 401–403, K408, and S430 each bind NAD(+); that span reads VVE. Residue H451 is the For 3-hydroxyacyl-CoA dehydrogenase activity of the active site. N454 is an NAD(+) binding site. Residues N501 and Y660 each contribute to the substrate site.

It in the N-terminal section; belongs to the enoyl-CoA hydratase/isomerase family. In the C-terminal section; belongs to the 3-hydroxyacyl-CoA dehydrogenase family. As to quaternary structure, heterotetramer of two alpha chains (FadB) and two beta chains (FadA).

The catalysed reaction is a (3S)-3-hydroxyacyl-CoA + NAD(+) = a 3-oxoacyl-CoA + NADH + H(+). It catalyses the reaction a (3S)-3-hydroxyacyl-CoA = a (2E)-enoyl-CoA + H2O. The enzyme catalyses a 4-saturated-(3S)-3-hydroxyacyl-CoA = a (3E)-enoyl-CoA + H2O. It carries out the reaction (3S)-3-hydroxybutanoyl-CoA = (3R)-3-hydroxybutanoyl-CoA. The catalysed reaction is a (3Z)-enoyl-CoA = a 4-saturated (2E)-enoyl-CoA. It catalyses the reaction a (3E)-enoyl-CoA = a 4-saturated (2E)-enoyl-CoA. It participates in lipid metabolism; fatty acid beta-oxidation. Involved in the aerobic and anaerobic degradation of long-chain fatty acids via beta-oxidation cycle. Catalyzes the formation of 3-oxoacyl-CoA from enoyl-CoA via L-3-hydroxyacyl-CoA. It can also use D-3-hydroxyacyl-CoA and cis-3-enoyl-CoA as substrate. The sequence is that of Fatty acid oxidation complex subunit alpha from Pseudomonas putida (strain ATCC 47054 / DSM 6125 / CFBP 8728 / NCIMB 11950 / KT2440).